The sequence spans 299 residues: Protoheme IX farnesyltransferase 1 (299 aa).

A run of 8 helical transmembrane segments spans residues 25-45 (VVVL…RAGV), 47-67 (WTVL…AAAV), 95-115 (TGAL…LLTF), 119-139 (LTAW…TGFL), 147-167 (IVIG…AATG), 173-193 (PLLL…ALAI), 226-246 (ALLA…LYLI), and 279-299 (IWYL…LLNL).

Belongs to the UbiA prenyltransferase family. Protoheme IX farnesyltransferase subfamily.

The protein resides in the cell inner membrane. It catalyses the reaction heme b + (2E,6E)-farnesyl diphosphate + H2O = Fe(II)-heme o + diphosphate. It functions in the pathway porphyrin-containing compound metabolism; heme O biosynthesis; heme O from protoheme: step 1/1. In terms of biological role, converts heme B (protoheme IX) to heme O by substitution of the vinyl group on carbon 2 of heme B porphyrin ring with a hydroxyethyl farnesyl side group. The chain is Protoheme IX farnesyltransferase 1 from Pseudomonas fluorescens (strain Pf0-1).